The sequence spans 512 residues: GMP synthase [glutamine-hydrolyzing] (512 aa).

Residues 7–197 (TIIVLDFGSQ…VFGVCGCSEG (191 aa)) form the Glutamine amidotransferase type-1 domain. Cys84 functions as the Nucleophile in the catalytic mechanism. Catalysis depends on residues His171 and Glu173. The GMPS ATP-PPase domain maps to 198–387 (WNMENFIEVE…LGIPDEIVWR (190 aa)). Position 225-231 (225-231 (SGGVDSS)) interacts with ATP.

As to quaternary structure, homodimer.

It carries out the reaction XMP + L-glutamine + ATP + H2O = GMP + L-glutamate + AMP + diphosphate + 2 H(+). The protein operates within purine metabolism; GMP biosynthesis; GMP from XMP (L-Gln route): step 1/1. In terms of biological role, catalyzes the synthesis of GMP from XMP. The protein is GMP synthase [glutamine-hydrolyzing] of Bacillus anthracis.